The chain runs to 146 residues: Large ribosomal subunit protein uL15 (146 aa).

The segment at 1–65 (MSDIQLNSLK…GQMPLQRRLP (65 aa)) is disordered. Positions 24 to 34 (RGIGSGLGKTA) are enriched in gly residues.

Belongs to the universal ribosomal protein uL15 family. Part of the 50S ribosomal subunit.

Binds to the 23S rRNA. The protein is Large ribosomal subunit protein uL15 of Bordetella avium (strain 197N).